The following is a 250-amino-acid chain: NADH-quinone oxidoreductase subunit C (250 aa).

This sequence belongs to the complex I 30 kDa subunit family. In terms of assembly, NDH-1 is composed of 14 different subunits. Subunits NuoB, C, D, E, F, and G constitute the peripheral sector of the complex.

Its subcellular location is the cell inner membrane. It carries out the reaction a quinone + NADH + 5 H(+)(in) = a quinol + NAD(+) + 4 H(+)(out). In terms of biological role, NDH-1 shuttles electrons from NADH, via FMN and iron-sulfur (Fe-S) centers, to quinones in the respiratory chain. The immediate electron acceptor for the enzyme in this species is believed to be ubiquinone. Couples the redox reaction to proton translocation (for every two electrons transferred, four hydrogen ions are translocated across the cytoplasmic membrane), and thus conserves the redox energy in a proton gradient. The sequence is that of NADH-quinone oxidoreductase subunit C from Xylella fastidiosa (strain 9a5c).